An 82-amino-acid polypeptide reads, in one-letter code: RNA-binding protein Hfq (82 aa).

Positions 9 to 69 (DQLLNTARKD…ISTIIPAKII (61 aa)) constitute a Sm domain.

It belongs to the Hfq family. As to quaternary structure, homohexamer.

Functionally, RNA chaperone that binds small regulatory RNA (sRNAs) and mRNAs to facilitate mRNA translational regulation in response to envelope stress, environmental stress and changes in metabolite concentrations. Also binds with high specificity to tRNAs. The sequence is that of RNA-binding protein Hfq from Leptospira borgpetersenii serovar Hardjo-bovis (strain L550).